A 229-amino-acid polypeptide reads, in one-letter code: Cytidylate kinase (229 aa).

12–20 (GPSGAGKGT) contacts ATP.

Belongs to the cytidylate kinase family. Type 1 subfamily.

It localises to the cytoplasm. It carries out the reaction CMP + ATP = CDP + ADP. The enzyme catalyses dCMP + ATP = dCDP + ADP. The protein is Cytidylate kinase of Serratia proteamaculans (strain 568).